Consider the following 184-residue polypeptide: uncharacterized protein (184 aa).

A helical membrane pass occupies residues 35–55; that stretch reads LSFLIYILYTFSISGLSTFVI.

Its subcellular location is the membrane. This is an uncharacterized protein from Schizosaccharomyces pombe (strain 972 / ATCC 24843) (Fission yeast).